Here is a 433-residue protein sequence, read N- to C-terminus: 26S proteasome regulatory subunit 7 (433 aa).

The segment at 1 to 22 (MPDYLGADQRKTKEDEKDDKPI) is disordered. Positions 8 to 22 (DQRKTKEDEKDDKPI) are enriched in basic and acidic residues. The residue at position 116 (lysine 116) is an N6-acetyllysine. An ATP-binding site is contributed by 216-223 (GPPGTGKT). Position 422 is an N6-acetyllysine (lysine 422).

It belongs to the AAA ATPase family. In terms of assembly, component of the 19S proteasome regulatory particle complex. The 26S proteasome consists of a 20S core particle (CP) and two 19S regulatory subunits (RP). The regulatory particle is made of a lid composed of 9 subunits, a base containing 6 ATPases including PSMC2 and few additional components. Interacts with NDC80/HEC; this interaction is detected only during M phase. Interacts and SQSTM1. Interacts with PAAF1. Directly interacts with TRIM5. Monoubiquitinated by RNF181. In terms of processing, phosphorylated. Dephosphorylated by UBLCP1 which impairs PSMC2 ATPase activity and disrupts 26S proteasome assembly.

The protein resides in the cytoplasm. It is found in the nucleus. In terms of biological role, component of the 26S proteasome, a multiprotein complex involved in the ATP-dependent degradation of ubiquitinated proteins. This complex plays a key role in the maintenance of protein homeostasis by removing misfolded or damaged proteins, which could impair cellular functions, and by removing proteins whose functions are no longer required. Therefore, the proteasome participates in numerous cellular processes, including cell cycle progression, apoptosis, or DNA damage repair. PSMC2 belongs to the heterohexameric ring of AAA (ATPases associated with diverse cellular activities) proteins that unfolds ubiquitinated target proteins that are concurrently translocated into a proteolytic chamber and degraded into peptides. The chain is 26S proteasome regulatory subunit 7 (PSMC2) from Pongo abelii (Sumatran orangutan).